Consider the following 418-residue polypeptide: Voltage-gated ClC-type chloride channel ClcB (418 aa).

10 consecutive transmembrane segments (helical) span residues 5 to 25, 54 to 74, 146 to 166, 168 to 188, 222 to 242, 258 to 278, 291 to 311, 316 to 336, 352 to 372, and 380 to 400; these read LLIATVVGILAAFAVAGFRHA, LLTPALGGLAAGLLLMGWQKF, LWIACGAAAGMAAAYRAPLAG, LFIAEVLFGTMMLASLGPVII, ALIISTGVLAGLCGPLLLTLM, WQLALGGLIVGLLSLFTPAVW, APPLLMIIAGIFLCKLFAVLA, GAPGGVFTPTLFIGLAIGMLY, LLLGLTGMATLLAATTHAPIM, and MTGEYQLLPGLLIACVIASVI.

The protein belongs to the chloride channel (TC 2.A.49) family. ClcB subfamily.

It is found in the cell inner membrane. In terms of biological role, probably acts as an electrical shunt for an outwardly-directed proton pump that is linked to amino acid decarboxylation, as part of the extreme acid resistance (XAR) response. This is Voltage-gated ClC-type chloride channel ClcB from Escherichia coli (strain SMS-3-5 / SECEC).